Consider the following 175-residue polypeptide: NADH-ubiquinone oxidoreductase chain 6 (175 aa).

6 helical membrane passes run 1-21 (MMYI…GFSS), 24-44 (SPVY…GIIM), 51-71 (LGLV…GYTI), 87-107 (VVLS…VWLF), 112-132 (ELVG…EGGF), and 148-168 (CGFW…FIAT).

It belongs to the complex I subunit 6 family. In terms of assembly, core subunit of respiratory chain NADH dehydrogenase (Complex I) which is composed of 45 different subunits.

The protein resides in the mitochondrion inner membrane. The catalysed reaction is a ubiquinone + NADH + 5 H(+)(in) = a ubiquinol + NAD(+) + 4 H(+)(out). Functionally, core subunit of the mitochondrial membrane respiratory chain NADH dehydrogenase (Complex I) which catalyzes electron transfer from NADH through the respiratory chain, using ubiquinone as an electron acceptor. Essential for the catalytic activity and assembly of complex I. The sequence is that of NADH-ubiquinone oxidoreductase chain 6 (MT-ND6) from Elephas maximus (Indian elephant).